Here is a 102-residue protein sequence, read N- to C-terminus: Trp operon repressor homolog (102 aa).

The DNA-binding element occupies Gln59–Leu82.

The protein belongs to the TrpR family. In terms of assembly, homodimer.

The protein resides in the cytoplasm. Its function is as follows. This protein is an aporepressor. When complexed with L-tryptophan it binds the operator region of the trp operon and prevents the initiation of transcription. The protein is Trp operon repressor homolog of Vibrio vulnificus (strain CMCP6).